Here is a 164-residue protein sequence, read N- to C-terminus: Large ribosomal subunit protein uL10 (164 aa).

It belongs to the universal ribosomal protein uL10 family. As to quaternary structure, part of the ribosomal stalk of the 50S ribosomal subunit. The N-terminus interacts with L11 and the large rRNA to form the base of the stalk. The C-terminus forms an elongated spine to which L12 dimers bind in a sequential fashion forming a multimeric L10(L12)X complex.

Functionally, forms part of the ribosomal stalk, playing a central role in the interaction of the ribosome with GTP-bound translation factors. This is Large ribosomal subunit protein uL10 from Aliivibrio fischeri (strain MJ11) (Vibrio fischeri).